Reading from the N-terminus, the 281-residue chain is Elongation factor Ts (281 aa).

The segment at 80–83 (TDFV) is involved in Mg(2+) ion dislocation from EF-Tu.

The protein belongs to the EF-Ts family.

The protein resides in the cytoplasm. Its function is as follows. Associates with the EF-Tu.GDP complex and induces the exchange of GDP to GTP. It remains bound to the aminoacyl-tRNA.EF-Tu.GTP complex up to the GTP hydrolysis stage on the ribosome. The protein is Elongation factor Ts of Aliivibrio fischeri (strain MJ11) (Vibrio fischeri).